A 739-amino-acid chain; its full sequence is Lysine decarboxylase (739 aa).

At Lys-367 the chain carries N6-(pyridoxal phosphate)lysine. Positions 714 to 726 are enriched in basic and acidic residues; the sequence is ADEPGDKPSDTVK. A disordered region spans residues 714 to 739; it reads ADEPGDKPSDTVKKAPGKKPSAAKKS. Residues 728–739 show a composition bias toward basic residues; that stretch reads APGKKPSAAKKS.

Belongs to the Orn/Lys/Arg decarboxylase class-I family. Pyridoxal 5'-phosphate is required as a cofactor.

It localises to the cytoplasm. It catalyses the reaction L-lysine + H(+) = cadaverine + CO2. The sequence is that of Lysine decarboxylase from Hafnia alvei.